The chain runs to 326 residues: Lipopolysaccharide heptosyltransferase 1 (326 aa).

ADP is bound by residues Thr-187, Thr-188, Lys-192, Glu-222, and Met-242. ADP-L-glycero-beta-D-manno-heptose contacts are provided by Thr-187, Thr-188, Lys-192, Glu-222, Met-242, Asp-261, Thr-262, Gly-263, and His-266. Residues Thr-262 and Gly-263 each coordinate ADP.

This sequence belongs to the glycosyltransferase 9 family. Monomer.

The protein resides in the cell inner membrane. It carries out the reaction an alpha-Kdo-(2-&gt;4)-alpha-Kdo-(2-&gt;6)-lipid A + ADP-L-glycero-beta-D-manno-heptose = an L-alpha-D-Hep-(1-&gt;5)-[alpha-Kdo-(2-&gt;4)]-alpha-Kdo-(2-&gt;6)-lipid A + ADP + H(+). The catalysed reaction is alpha-Kdo-(2-&gt;4)-alpha-Kdo-(2-&gt;6)-lipid A (E. coli) + ADP-L-glycero-beta-D-manno-heptose = L-alpha-D-Hep-(1-&gt;5)-[alpha-Kdo-(2-&gt;4)]-alpha-Kdo-(2-&gt;6)-lipid A (E. coli) + ADP + H(+). Its pathway is bacterial outer membrane biogenesis; LPS core biosynthesis. Inhibited by ADP-L-glycero-beta-D-gluco-2-deoxy-2-fluoro-heptose (ADP-2F-heptose), a non-cleavable analog of the substrate ADP-L-glycero-beta-D-manno-heptose. Its function is as follows. Glycosyltransferase involved in the biosynthesis of the core oligosaccharide region of lipopolysaccharide (LPS). Catalyzes the addition of the first heptose unit to one 3-deoxy-D-manno-octulosonic acid (Kdo) residue of the Kdo2-lipid A module. This is Lipopolysaccharide heptosyltransferase 1 from Escherichia coli O18:K1:H7 (strain RS218 / NMEC).